The sequence spans 267 residues: Cytokinesis defective protein 7 (267 aa).

Residues 244-267 form a disordered region; sequence RNQADQSILPPSGDQQHHRSELHA. Residues 258–267 show a composition bias toward basic and acidic residues; sequence QQHHRSELHA.

The polypeptide is Cytokinesis defective protein 7 (Caenorhabditis elegans).